The primary structure comprises 364 residues: Tyrosyl-DNA phosphodiesterase 2 (364 aa).

M1 is modified (N-acetylmethionine). Over residues 1 to 10 (MERNSGPEAG) the composition is skewed to low complexity. Positions 1–21 (MERNSGPEAGPEAELEEGEPE) are disordered. K23 is covalently cross-linked (Glycyl lysine isopeptide (Lys-Gly) (interchain with G-Cter in SUMO2)). The disordered stretch occupies residues 68-108 (ESASESRPESLSEPGSCVDLTKEETNDSISSKTSTSEDKSV). T88 and T92 each carry phosphothreonine; by ACVR1B. S95 carries the phosphoserine modification. The tract at residues 122 to 126 (NIDGL) is interaction with 5' end of substrate DNA. Mg(2+) is bound by residues D124 and E154. Positions 228–233 (HLESTR) are interaction with 5' end of substrate DNA. D264 serves as the catalytic Proton donor/acceptor. The segment at 266-268 (NLR) is interaction with 5' end of substrate DNA.

The protein belongs to the CCR4/nocturin family. Interacts with TRAF2, TRAF3, TRAF5, TRAF6, TNFRSF8/CD30, TNFRSF5/CD40, TNFRSF1B/TNF-R75, ETS1, ETS2, FLI1, SMAD3 and ACVR1B/ALK4. Requires Mg(2+) as cofactor. Mn(2+) is required as a cofactor. In terms of processing, ubiquitinated by TRAF6.

Its subcellular location is the nucleus. The protein localises to the PML body. It is found in the nucleolus. The protein resides in the cytoplasm. Its function is as follows. DNA repair enzyme that can remove a variety of covalent adducts from DNA through hydrolysis of a 5'-phosphodiester bond, giving rise to DNA with a free 5' phosphate. Catalyzes the hydrolysis of dead-end complexes between DNA and the topoisomerase 2 (TOP2) active site tyrosine residue. The 5'-tyrosyl DNA phosphodiesterase activity can enable the repair of TOP2-induced DNA double-strand breaks/DSBs without the need for nuclease activity, creating a 'clean' DSB with 5'-phosphate termini that are ready for ligation. Thereby, protects the transcription of many genes involved in neurological development and maintenance from the abortive activity of TOP2. Hydrolyzes 5'-phosphoglycolates on protruding 5' ends on DSBs due to DNA damage by radiation and free radicals. Has preference for single-stranded DNA or duplex DNA with a 4 base pair overhang as substrate. Also has 3'-tyrosyl DNA phosphodiesterase activity, but less efficiently and much slower than TDP1. Constitutes the major if not only 5'-tyrosyl-DNA phosphodiesterase in cells. Also acts as an adapter by participating in the specific activation of MAP3K7/TAK1 in response to TGF-beta: associates with components of the TGF-beta receptor-TRAF6-TAK1 signaling module and promotes their ubiquitination dependent complex formation. Involved in non-canonical TGF-beta induced signaling routes. May also act as a negative regulator of ETS1 and may inhibit NF-kappa-B activation. Acts as a regulator of ribosome biogenesis following stress. This Bos taurus (Bovine) protein is Tyrosyl-DNA phosphodiesterase 2 (TDP2).